The primary structure comprises 145 residues: Neuromedin-S (145 aa).

The first 27 residues, Met1–Gly27, serve as a signal peptide directing secretion. Propeptides lie at residues Phe28 to Tyr89 and Phe92 to Thr117. Asn136 bears the Asparagine amide mark. The propeptide occupies Val140–His145.

The protein belongs to the NmU family. As to expression, expressed by the skin glands.

It localises to the secreted. Functionally, stimulates uterine smooth muscle contraction. Synthetic peptide NmS-17 induces calcium mobilization in CHO cells transfected with either human FM-3/GPR66 (EC(50)=0.085 nM) or FM-4/TGR-1 (EC(50)=0.231 nM) NmU/NmS receptors. The polypeptide is Neuromedin-S (nms) (Bombina orientalis (Oriental fire-bellied toad)).